The sequence spans 411 residues: Probable UDP-arabinose 4-epimerase 3 (411 aa).

Over residues 1–13 (MLSFSRARSQGRN) the composition is skewed to polar residues. Residues 1-22 (MLSFSRARSQGRNTRPLGGGME) form a disordered region. Residues 1 to 31 (MLSFSRARSQGRNTRPLGGGMEYLEPKRKSN) lie on the Cytoplasmic side of the membrane. Residues 32–50 (VMGKIILVVSLTALCIFML) traverse the membrane as a helical; Signal-anchor for type II membrane protein segment. Residues 51 to 411 (KHAPSFTSPT…KTHPHGYASS (361 aa)) lie on the Lumenal side of the membrane. Position 71 to 102 (71 to 102 (HVLVTGGAGYIGSHAALRLLKDSYRVTIVDNL)) interacts with NAD(+). Tyr-219 acts as the Proton acceptor in catalysis.

The protein belongs to the NAD(P)-dependent epimerase/dehydratase family. Requires NAD(+) as cofactor.

The protein localises to the golgi apparatus. Its subcellular location is the golgi stack membrane. It carries out the reaction UDP-beta-L-arabinopyranose = UDP-alpha-D-xylose. Its pathway is nucleotide-sugar biosynthesis; UDP-L-arabinose biosynthesis; UDP-L-arabinose from UDP-alpha-D-xylose: step 1/1. It participates in cell wall biogenesis; cell wall polysaccharide biosynthesis. This is Probable UDP-arabinose 4-epimerase 3 from Arabidopsis thaliana (Mouse-ear cress).